The sequence spans 327 residues: Altered inheritance rate of mitochondria protein 25 (327 aa).

Belongs to the phospholipid scramblase family.

The protein resides in the mitochondrion. The chain is Altered inheritance rate of mitochondria protein 25 (AIM25) from Saccharomyces cerevisiae (strain ATCC 204508 / S288c) (Baker's yeast).